Consider the following 371-residue polypeptide: Protein-glutamate methylesterase/protein-glutamine glutaminase 3 (371 aa).

In terms of domain architecture, Response regulatory spans Arg-5–Asp-120. Asp-56 carries the 4-aspartylphosphate modification. One can recognise a CheB-type methylesterase domain in the interval Pro-174–Gln-362. Catalysis depends on residues Ser-186, His-213, and Asp-309.

This sequence belongs to the CheB family. In terms of processing, phosphorylated by CheA. Phosphorylation of the N-terminal regulatory domain activates the methylesterase activity.

It localises to the cytoplasm. The enzyme catalyses [protein]-L-glutamate 5-O-methyl ester + H2O = L-glutamyl-[protein] + methanol + H(+). It carries out the reaction L-glutaminyl-[protein] + H2O = L-glutamyl-[protein] + NH4(+). Involved in chemotaxis. Part of a chemotaxis signal transduction system that modulates chemotaxis in response to various stimuli. Catalyzes the demethylation of specific methylglutamate residues introduced into the chemoreceptors (methyl-accepting chemotaxis proteins or MCP) by CheR. Also mediates the irreversible deamidation of specific glutamine residues to glutamic acid. This is Protein-glutamate methylesterase/protein-glutamine glutaminase 3 from Geobacter sulfurreducens (strain ATCC 51573 / DSM 12127 / PCA).